Consider the following 352-residue polypeptide: Peptide chain release factor 1 (352 aa).

Gln-233 is subject to N5-methylglutamine. Residues 288–309 (NAKDRKEQVGSGDRSERIRTYN) form a disordered region. Residues 289 to 306 (AKDRKEQVGSGDRSERIR) show a composition bias toward basic and acidic residues.

The protein belongs to the prokaryotic/mitochondrial release factor family. In terms of processing, methylated by PrmC. Methylation increases the termination efficiency of RF1.

The protein localises to the cytoplasm. Peptide chain release factor 1 directs the termination of translation in response to the peptide chain termination codons UAG and UAA. This Helicobacter acinonychis (strain Sheeba) protein is Peptide chain release factor 1.